Reading from the N-terminus, the 233-residue chain is Syntaxin-52 (233 aa).

Over 1–209 (MASSSDPWMR…NKSMKSGCSC (209 aa)) the chain is Cytoplasmic. In terms of domain architecture, t-SNARE coiled-coil homology spans 137-199 (RQVMREQDEG…RRVQKSLALM (63 aa)). A helical; Anchor for type IV membrane protein transmembrane segment spans residues 210 to 230 (MSMLLSVLGIVGLALVIWLLV). At 231–233 (KYL) the chain is on the vesicular side.

It belongs to the syntaxin family. In terms of assembly, interacts either with VTI11 and SYP21, or with VTI11 and SYP22 in the prevacuolar compartment, or with VTI12 and SYP61 in the trans-Golgi network to form t-SNARE complexes. As to expression, expressed in root, leaf, stem, flower and silique.

The protein resides in the golgi apparatus. Its subcellular location is the trans-Golgi network membrane. The protein localises to the prevacuolar compartment membrane. In terms of biological role, vesicle trafficking protein that functions in the secretory pathway. In Arabidopsis thaliana (Mouse-ear cress), this protein is Syntaxin-52 (SYP52).